The following is a 150-amino-acid chain: UPF0756 membrane protein PMI1560 (150 aa).

The next 4 helical transmembrane spans lie at 16–36, 51–71, 82–102, and 123–143; these read GLGI…LLVI, YGMT…IATG, FLNW…WLGA, and VIGV…AGIL.

It belongs to the UPF0756 family.

Its subcellular location is the cell membrane. The chain is UPF0756 membrane protein PMI1560 from Proteus mirabilis (strain HI4320).